A 122-amino-acid chain; its full sequence is Probable glycine cleavage system H protein (122 aa).

One can recognise a Lipoyl-binding domain in the interval 23–104 (IATVGITDYA…PYGNWLVKMK (82 aa)). Lysine 64 is modified (N6-lipoyllysine).

The protein belongs to the GcvH family. The glycine cleavage system is composed of four proteins: P, T, L and H. (R)-lipoate is required as a cofactor.

The glycine cleavage system catalyzes the degradation of glycine. The H protein shuttles the methylamine group of glycine from the P protein to the T protein. The chain is Probable glycine cleavage system H protein from Thermoplasma volcanium (strain ATCC 51530 / DSM 4299 / JCM 9571 / NBRC 15438 / GSS1).